The sequence spans 482 residues: tRNA sulfurtransferase (482 aa).

Residues 61–165 enclose the THUMP domain; that stretch reads DQILAILMQT…YDHLHQVLHR (105 aa). ATP-binding positions include 183–184, lysine 265, glycine 287, and glutamine 296; that span reads LI. The cysteines at positions 344 and 456 are disulfide-linked. A Rhodanese domain is found at 404–482; that stretch reads IGDGAIVLDI…GYGNIKVYRP (79 aa). Residue cysteine 456 is the Cysteine persulfide intermediate of the active site.

This sequence belongs to the ThiI family.

It localises to the cytoplasm. It catalyses the reaction [ThiI sulfur-carrier protein]-S-sulfanyl-L-cysteine + a uridine in tRNA + 2 reduced [2Fe-2S]-[ferredoxin] + ATP + H(+) = [ThiI sulfur-carrier protein]-L-cysteine + a 4-thiouridine in tRNA + 2 oxidized [2Fe-2S]-[ferredoxin] + AMP + diphosphate. It carries out the reaction [ThiS sulfur-carrier protein]-C-terminal Gly-Gly-AMP + S-sulfanyl-L-cysteinyl-[cysteine desulfurase] + AH2 = [ThiS sulfur-carrier protein]-C-terminal-Gly-aminoethanethioate + L-cysteinyl-[cysteine desulfurase] + A + AMP + 2 H(+). Its pathway is cofactor biosynthesis; thiamine diphosphate biosynthesis. Catalyzes the ATP-dependent transfer of a sulfur to tRNA to produce 4-thiouridine in position 8 of tRNAs, which functions as a near-UV photosensor. Also catalyzes the transfer of sulfur to the sulfur carrier protein ThiS, forming ThiS-thiocarboxylate. This is a step in the synthesis of thiazole, in the thiamine biosynthesis pathway. The sulfur is donated as persulfide by IscS. In Photobacterium profundum (strain SS9), this protein is tRNA sulfurtransferase.